The following is a 164-amino-acid chain: Transcriptional regulator MraZ (164 aa).

SpoVT-AbrB domains lie at 7–57 and 86–129; these read THQN…TVGA and AYPL…NPEA. The segment at 133 to 164 is disordered; the sequence is RRQAARSRARTLATSRRPASAPAAGNTAGAAE. Residues 142 to 164 are compositionally biased toward low complexity; it reads RTLATSRRPASAPAAGNTAGAAE.

This sequence belongs to the MraZ family. As to quaternary structure, forms oligomers.

It is found in the cytoplasm. Its subcellular location is the nucleoid. This is Transcriptional regulator MraZ from Gluconobacter oxydans (strain 621H) (Gluconobacter suboxydans).